Here is a 191-residue protein sequence, read N- to C-terminus: MYVVLEGVDGAGKSTQVELLKDRFKNALFTKEPGGTRMGESLRRIALNENISELARAFLFLSDRAEHTESVIKPALKEKKLIISDRSLISGMAYSQFSSLELNLLATQSVLPAKIILLLIDKEGLKQRLSLKSLDKIENQGIEKLLHIQQKLKTHAYALQEKFGCEVLELDAKESVKNLHEKIAAFIKCAV.

7–14 lines the ATP pocket; the sequence is GVDGAGKS.

This sequence belongs to the thymidylate kinase family.

The catalysed reaction is dTMP + ATP = dTDP + ADP. In terms of biological role, phosphorylation of dTMP to form dTDP in both de novo and salvage pathways of dTTP synthesis. This chain is Thymidylate kinase (tmk), found in Helicobacter pylori (strain ATCC 700392 / 26695) (Campylobacter pylori).